Reading from the N-terminus, the 362-residue chain is GDSL esterase/lipase At5g45670 (362 aa).

An N-terminal signal peptide occupies residues 1–23; the sequence is MARMSLMIMMIMVAVTMINIAKS. Serine 36 (nucleophile) is an active-site residue. Catalysis depends on residues aspartate 326 and histidine 329.

The protein belongs to the 'GDSL' lipolytic enzyme family.

Its subcellular location is the secreted. This Arabidopsis thaliana (Mouse-ear cress) protein is GDSL esterase/lipase At5g45670.